We begin with the raw amino-acid sequence, 130 residues long: Histone H2A type 2 (130 aa).

Residues M1 to A22 are disordered. An N-acetylserine modification is found at S2. The residue at position 2 (S2) is a Phosphoserine. K6 bears the N6-(2-hydroxyisobutyryl)lysine mark. At K6 the chain carries N6-acetyllysine. The segment covering Q7 to S19 has biased composition (basic residues). An N6-(2-hydroxyisobutyryl)lysine; alternate modification is found at K10. K10 carries the post-translational modification N6-lactoyllysine; alternate. K10 bears the N6-succinyllysine mark. Residues K14 and K16 each participate in a glycyl lysine isopeptide (Lys-Gly) (interchain with G-Cter in ubiquitin) cross-link. At K37 the chain carries N6-(2-hydroxyisobutyryl)lysine; alternate. K76 carries the N6-(2-hydroxyisobutyryl)lysine modification. At K96 the chain carries N6-(2-hydroxyisobutyryl)lysine; alternate. Residue K96 is modified to N6-succinyllysine. Position 96 is an N6-glutaryllysine; alternate (K96). An N5-methylglutamine modification is found at Q105. An N6-(2-hydroxyisobutyryl)lysine; alternate modification is found at K119. Position 119 is an N6-glutaryllysine; alternate (K119). A Glycyl lysine isopeptide (Lys-Gly) (interchain with G-Cter in ubiquitin) cross-link involves residue K120.

Belongs to the histone H2A family. The nucleosome is a histone octamer containing two molecules each of H2A, H2B, H3 and H4 assembled in one H3-H4 heterotetramer and two H2A-H2B heterodimers. The octamer wraps approximately 147 bp of DNA. Post-translationally, monoubiquitination of Lys-120 (H2AK119Ub) gives a specific tag for epigenetic transcriptional repression. Following DNA double-strand breaks (DSBs), it is ubiquitinated through 'Lys-63' linkage of ubiquitin moieties, leading to the recruitment of repair proteins to sites of DNA damage. H2AK119Ub and ionizing radiation-induced 'Lys-63'-linked ubiquitination are distinct events. In terms of processing, phosphorylation on Ser-2 is enhanced during mitosis. Phosphorylation on Ser-2 directly represses transcription. Glutamine methylation at Gln-105 (H2AQ104me) by FBL is specifically dedicated to polymerase I. It is present at 35S ribosomal DNA locus and impairs binding of the FACT complex.

The protein localises to the nucleus. It localises to the chromosome. Its function is as follows. Core component of nucleosome. Nucleosomes wrap and compact DNA into chromatin, limiting DNA accessibility to the cellular machineries which require DNA as a template. Histones thereby play a central role in transcription regulation, DNA repair, DNA replication and chromosomal stability. DNA accessibility is regulated via a complex set of post-translational modifications of histones, also called histone code, and nucleosome remodeling. The protein is Histone H2A type 2 of Xenopus laevis (African clawed frog).